The following is a 722-amino-acid chain: Polyribonucleotide nucleotidyltransferase (722 aa).

Positions 495 and 501 each coordinate Mg(2+). In terms of domain architecture, KH spans 562–621 (PRLLSFRIDPELIGTVIGPGGRTIKGITERTNTKIDIEDGGIVTIASHDGVAAEEAQKII). Residues 631–699 (GEVFTGSITR…NRGRINLTLR (69 aa)) form the S1 motif domain.

Belongs to the polyribonucleotide nucleotidyltransferase family. Requires Mg(2+) as cofactor.

It localises to the cytoplasm. It catalyses the reaction RNA(n+1) + phosphate = RNA(n) + a ribonucleoside 5'-diphosphate. Its function is as follows. Involved in mRNA degradation. Catalyzes the phosphorolysis of single-stranded polyribonucleotides processively in the 3'- to 5'-direction. This is Polyribonucleotide nucleotidyltransferase from Prochlorococcus marinus (strain SARG / CCMP1375 / SS120).